The primary structure comprises 199 residues: Peroxiredoxin-2 (199 aa).

The Thioredoxin domain maps to 7–165; sequence AHVGKPAPEF…ALRLVQAFQY (159 aa). The active-site Cysteine sulfenic acid (-SOH) intermediate is the cysteine 52. Serine 113 is modified (phosphoserine). The residue at position 183 (threonine 183) is a Phosphothreonine. Lysine 197 is modified (N6-acetyllysine).

It belongs to the peroxiredoxin family. AhpC/Prx1 subfamily. In terms of assembly, homodimer; disulfide-linked, upon oxidation. 5 homodimers assemble to form a ring-like decamer. Interacts with TIPIN. The enzyme can be inactivated by further oxidation of the cysteine sulfenic acid (C(P)-SOH) to sulphinic acid (C(P)-SO2H) instead of its condensation to a disulfide bond. It can be reactivated by forming a transient disulfide bond with sulfiredoxin SRXN1, which reduces the cysteine sulfinic acid in an ATP- and Mg-dependent manner. Post-translationally, acetylation increases resistance to transition to high molecular-mass complexes. Deacetylated by HDAC6 which decreases reducing activity.

It is found in the cytoplasm. It carries out the reaction a hydroperoxide + [thioredoxin]-dithiol = an alcohol + [thioredoxin]-disulfide + H2O. Thiol-specific peroxidase that catalyzes the reduction of hydrogen peroxide and organic hydroperoxides to water and alcohols, respectively. Plays a role in cell protection against oxidative stress by detoxifying peroxides and as sensor of hydrogen peroxide-mediated signaling events. Might participate in the signaling cascades of growth factors and tumor necrosis factor-alpha by regulating the intracellular concentrations of H(2)O(2). The polypeptide is Peroxiredoxin-2 (PRDX2) (Bos taurus (Bovine)).